Consider the following 396-residue polypeptide: Growth-regulating factor 1 (396 aa).

One can recognise a QLQ domain in the interval 18–53; the sequence is PFTASQWQELEHQALIYKYMASGTPIPSDLILPLRR. Short sequence motifs (bipartite nuclear localization signal) lie at residues 86 to 105 and 123 to 130; these read RKAE…KKWR and RGKNRSRK. The 45-residue stretch at 90-134 folds into the WRC domain; that stretch reads DPEPGRCRRTDGKKWRCSKEAYPDSKYCEKHMHRGKNRSRKPVEM. The tract at residues 117-176 is disordered; sequence CEKHMHRGKNRSRKPVEMSLATPPPPSSSATSAASNSSAGVAPTTTTTSSPAPSYSRPAP. Basic residues predominate over residues 120–129; it reads HMHRGKNRSR. The span at 144-174 shows a compositional bias: low complexity; sequence SSATSAASNSSAGVAPTTTTTSSPAPSYSRP.

The protein belongs to the GRF family. As to expression, highly expressed in the intercalary meristem of the internode and in the shoot apex. Detected in the leaf primordia and emerging leaves in the uppermost node. Preferentially localized in the epidermis and in the tissues surrounding vascular bundles of the intercalary meristem of the internode and in adventitious roots of the second highest node. Low expression in the coleoptile and in the youngest leaf.

It localises to the nucleus. Functionally, transcription activator that plays a regulatory role in gibberellin-induced stem elongation. The polypeptide is Growth-regulating factor 1 (GRF1) (Oryza sativa subsp. indica (Rice)).